A 750-amino-acid polypeptide reads, in one-letter code: Circadian input-output histidine kinase CikA (750 aa).

An N-terminal domain region spans residues 1–173 (MLPAFSPIFR…QVIAQIRQSL (173 aa)). The tract at residues 174 to 333 (DLSEILNNAV…KNFLGQIGEH (160 aa)) is GAF domain. Residues 385–609 (NISHELRTPL…IFTTVIPQQN (225 aa)) enclose the Histidine kinase domain. Position 388 is a phosphohistidine; by autocatalysis (histidine 388). The interval 604-750 (VIPQQNFPPT…VQSIQQEPLR (147 aa)) is psR domain, bind KaiB(fs). Residues 631-745 (SVIVIEQDEE…LLLQRVQSIQ (115 aa)) form the Response regulatory domain. Aspartate 680 bears the 4-aspartylphosphate mark.

The protein in the N-terminal section; belongs to the phytochrome family. In terms of assembly, homodimer. Part of the circadian clock (KaiA, KaiB, KaiC, CikA, RpaA, SasA), the composition of which varies during the circadian cycle. KaiA and CikA compete for binding to KaiB(fs). Interacts with RpaA.

It carries out the reaction ATP + protein L-histidine = ADP + protein N-phospho-L-histidine.. Its function is as follows. Functions in an input pathway to the Kai circadian clock. Senses oxidized quinones via its C-terminal pseudo-receiver domain, providing a link between cell metabolism and the clock. Affects the ratio of phosphorylated to unphosphorylated KaiC, binds quinones via its pseudo-receptor domain. Quinone-binding destabilizes the protein rapidly. Autophosphorylates, does not transfer the phosphate to its pseudo-receiver (PsR) domain. May play a role in cell division. Functionally, also functions in a two-component CikA/RpaA output pathway from the circadian clock, negatively regulating kaiBC expression independently of labA and of sasA. One of three clock output pathways. Dephosphorylates phospho-RpaA, enhanced by KaiB and KaiC, has only modest kinase activity on RpaA. In Synechocystis sp. (strain ATCC 27184 / PCC 6803 / Kazusa), this protein is Circadian input-output histidine kinase CikA.